We begin with the raw amino-acid sequence, 271 residues long: Cobalt import ATP-binding protein CbiO (271 aa).

In terms of domain architecture, ABC transporter spans 2–236 (LATSDLWFRY…TEAMEHAGLT (235 aa)). 34–41 (GANGCGKS) contacts ATP.

This sequence belongs to the ABC transporter superfamily. Cobalt importer (TC 3.A.1.18.1) family. Forms an energy-coupling factor (ECF) transporter complex composed of an ATP-binding protein (A component, CbiO), a transmembrane protein (T component, CbiQ) and 2 possible substrate-capture proteins (S components, CbiM and CbiN) of unknown stoichimetry.

The protein localises to the cell inner membrane. The protein operates within cofactor biosynthesis; adenosylcobalamin biosynthesis. Functionally, part of the energy-coupling factor (ECF) transporter complex CbiMNOQ involved in cobalt import. Presumably responsible for energy coupling to the transport system. The polypeptide is Cobalt import ATP-binding protein CbiO (Salmonella paratyphi A (strain ATCC 9150 / SARB42)).